Here is a 208-residue protein sequence, read N- to C-terminus: FMN-dependent NADH:quinone oxidoreductase 2 (208 aa).

Residue 17 to 19 (SVS) coordinates FMN.

Belongs to the azoreductase type 1 family. Homodimer. It depends on FMN as a cofactor.

The enzyme catalyses 2 a quinone + NADH + H(+) = 2 a 1,4-benzosemiquinone + NAD(+). It carries out the reaction N,N-dimethyl-1,4-phenylenediamine + anthranilate + 2 NAD(+) = 2-(4-dimethylaminophenyl)diazenylbenzoate + 2 NADH + 2 H(+). Its function is as follows. Quinone reductase that provides resistance to thiol-specific stress caused by electrophilic quinones. In terms of biological role, also exhibits azoreductase activity. Catalyzes the reductive cleavage of the azo bond in aromatic azo compounds to the corresponding amines. This chain is FMN-dependent NADH:quinone oxidoreductase 2, found in Halalkalibacterium halodurans (strain ATCC BAA-125 / DSM 18197 / FERM 7344 / JCM 9153 / C-125) (Bacillus halodurans).